Consider the following 210-residue polypeptide: Protein LURP-one-related 5 (210 aa).

It belongs to the LOR family.

Might be related to the phospholipid scramblase and tubby-like superfamily of membrane tethered transcription factors. The sequence is that of Protein LURP-one-related 5 from Arabidopsis thaliana (Mouse-ear cress).